The sequence spans 1045 residues: Protein transport protein Sec16B (1045 aa).

Residues Met1 to Arg13 are compositionally biased toward pro residues. A disordered region spans residues Met1–Trp78. Over residues Asp22–His33 the composition is skewed to basic and acidic residues. The segment covering Gln50 to Gln60 has biased composition (polar residues). Ser55 and Ser137 each carry phosphoserine. The span at Arg149 to Glu168 shows a compositional bias: basic and acidic residues. 4 disordered regions span residues Arg149–Pro193, Gln707–Ser733, Ala748–Pro789, and Gln813–Cys1045. Ser186 carries the post-translational modification Phosphoserine. Residues Ala267–Ala711 form a central conserved domain (CCD); required for localization to endoplasmic reticulum exit sites region. The span at Gly773–Pro784 shows a compositional bias: low complexity. 4 positions are modified to phosphoserine: Ser852, Ser858, Ser866, and Ser867. The segment covering Glu916–Gln926 has biased composition (acidic residues). A compositionally biased stretch (pro residues) spans Ser942–Pro953. Residues Ala957–Glu966 are compositionally biased toward gly residues. Positions Glu989 to Asn998 are enriched in polar residues.

The protein belongs to the SEC16 family. In terms of assembly, SEC16A and SEC16B are each present in multiple copies in a heteromeric complex. Interacts with TFG. Interacts with SEC13. Liver.

It is found in the endoplasmic reticulum membrane. The protein resides in the golgi apparatus membrane. Functionally, plays a role in the organization of the endoplasmic reticulum exit sites (ERES), also known as transitional endoplasmic reticulum (tER). Required for secretory cargo traffic from the endoplasmic reticulum to the Golgi apparatus. Involved in peroxisome biogenesis. Regulates the transport of peroxisomal biogenesis factors PEX3 and PEX16 from the ER to peroxisomes. The polypeptide is Protein transport protein Sec16B (SEC16B) (Oryctolagus cuniculus (Rabbit)).